Here is a 469-residue protein sequence, read N- to C-terminus: UDP-N-acetylmuramate--L-alanine ligase (469 aa).

Residue 122 to 128 participates in ATP binding; the sequence is GTHGKTT.

The protein belongs to the MurCDEF family.

The protein localises to the cytoplasm. It carries out the reaction UDP-N-acetyl-alpha-D-muramate + L-alanine + ATP = UDP-N-acetyl-alpha-D-muramoyl-L-alanine + ADP + phosphate + H(+). Its pathway is cell wall biogenesis; peptidoglycan biosynthesis. Cell wall formation. This is UDP-N-acetylmuramate--L-alanine ligase from Legionella pneumophila subsp. pneumophila (strain Philadelphia 1 / ATCC 33152 / DSM 7513).